Here is a 631-residue protein sequence, read N- to C-terminus: Probable ATP-dependent RNA helicase DDX53 (631 aa).

In terms of domain architecture, KH spans 48 to 109 (EPPLCFKIKN…EMKAKAKAAI (62 aa)). A Q motif motif is present at residues 222–250 (RFKDAFQQYPDLLKSIIRVGIVKPTPIQS). ATP contacts are provided by residues K244, Q249, 268 to 273 (TGTGKT), and H311. A Helicase ATP-binding domain is found at 253-428 (WPIILQGIDL…LSYLKDPMIV (176 aa)). A DEAD box motif is present at residues 376-379 (DEAD). In terms of domain architecture, Helicase C-terminal spans 440–601 (TVKQNIIVTT…SVPEDLVVMA (162 aa)).

It belongs to the DEAD box helicase family. In terms of tissue distribution, expressed in testis. Wide expression in various cancer tissues and cancer cell lines.

It localises to the nucleus. It carries out the reaction ATP + H2O = ADP + phosphate + H(+). This Homo sapiens (Human) protein is Probable ATP-dependent RNA helicase DDX53 (DDX53).